The following is a 304-amino-acid chain: ATP phosphoribosyltransferase (304 aa).

The protein belongs to the ATP phosphoribosyltransferase family. Long subfamily. The cofactor is Mg(2+).

The protein localises to the cytoplasm. The catalysed reaction is 1-(5-phospho-beta-D-ribosyl)-ATP + diphosphate = 5-phospho-alpha-D-ribose 1-diphosphate + ATP. The protein operates within amino-acid biosynthesis; L-histidine biosynthesis; L-histidine from 5-phospho-alpha-D-ribose 1-diphosphate: step 1/9. Feedback inhibited by histidine. Its function is as follows. Catalyzes the condensation of ATP and 5-phosphoribose 1-diphosphate to form N'-(5'-phosphoribosyl)-ATP (PR-ATP). Has a crucial role in the pathway because the rate of histidine biosynthesis seems to be controlled primarily by regulation of HisG enzymatic activity. The protein is ATP phosphoribosyltransferase of Xanthomonas euvesicatoria pv. vesicatoria (strain 85-10) (Xanthomonas campestris pv. vesicatoria).